The chain runs to 695 residues: Phenoloxidase subunit 2 (695 aa).

Cu cation is bound by residues H215, H219, and H245. The active-site Proton acceptor is the E353. H368, H372, and H408 together coordinate Cu cation. Disulfide bonds link C586–C630 and C588–C637.

In terms of assembly, heterodimer. Forms a complex with an interleukin 1-like protein as a consequence of a host defense response. Cu(2+) is required as a cofactor. Post-translationally, the N-terminus is blocked. As to expression, synthesized by oenocytoids, a type of hemocyte, and released into the hemolymph plasma.

The protein localises to the secreted. The enzyme catalyses 2 L-dopa + O2 = 2 L-dopaquinone + 2 H2O. The catalysed reaction is L-tyrosine + O2 = L-dopaquinone + H2O. Its activity is regulated as follows. Activated by immulectin and lipopolysaccharide. Functionally, this is a copper-containing oxidase that functions in the formation of pigments such as melanins and other polyphenolic compounds. Catalyzes the rate-limiting conversions of tyrosine to DOPA, DOPA to DOPA-quinone and possibly 5,6 dihydroxyindole to indole-5'6 quinone. Binds to the surface of hemocytes and is involved in hemocyte melanization. The protein is Phenoloxidase subunit 2 of Manduca sexta (Tobacco hawkmoth).